The sequence spans 247 residues: UPF0259 membrane protein BUAPTUC7_273 (247 aa).

A run of 6 helical transmembrane segments spans residues 20-40 (IGAI…IDMF), 85-105 (IMES…LISF), 114-134 (IVSS…LNFL), 137-157 (FIIQ…SIIL), 188-208 (IIGP…MLLA), and 218-238 (LFLI…IYLF).

This sequence belongs to the UPF0259 family.

The protein localises to the cell membrane. The polypeptide is UPF0259 membrane protein BUAPTUC7_273 (Buchnera aphidicola subsp. Acyrthosiphon pisum (strain Tuc7)).